Here is a 377-residue protein sequence, read N- to C-terminus: Anhydro-N-acetylmuramic acid kinase (377 aa).

18–25 provides a ligand contact to ATP; that stretch reads GTSADGID.

Belongs to the anhydro-N-acetylmuramic acid kinase family.

It catalyses the reaction 1,6-anhydro-N-acetyl-beta-muramate + ATP + H2O = N-acetyl-D-muramate 6-phosphate + ADP + H(+). It participates in amino-sugar metabolism; 1,6-anhydro-N-acetylmuramate degradation. Its pathway is cell wall biogenesis; peptidoglycan recycling. Functionally, catalyzes the specific phosphorylation of 1,6-anhydro-N-acetylmuramic acid (anhMurNAc) with the simultaneous cleavage of the 1,6-anhydro ring, generating MurNAc-6-P. Is required for the utilization of anhMurNAc either imported from the medium or derived from its own cell wall murein, and thus plays a role in cell wall recycling. This is Anhydro-N-acetylmuramic acid kinase from Xanthomonas oryzae pv. oryzae (strain MAFF 311018).